The primary structure comprises 1368 residues: DNA-directed RNA polymerase subunit beta (1368 aa).

The protein belongs to the RNA polymerase beta chain family. The RNAP catalytic core consists of 2 alpha, 1 beta, 1 beta' and 1 omega subunit. When a sigma factor is associated with the core the holoenzyme is formed, which can initiate transcription.

The enzyme catalyses RNA(n) + a ribonucleoside 5'-triphosphate = RNA(n+1) + diphosphate. Its function is as follows. DNA-dependent RNA polymerase catalyzes the transcription of DNA into RNA using the four ribonucleoside triphosphates as substrates. This Burkholderia ambifaria (strain ATCC BAA-244 / DSM 16087 / CCUG 44356 / LMG 19182 / AMMD) (Burkholderia cepacia (strain AMMD)) protein is DNA-directed RNA polymerase subunit beta.